A 262-amino-acid polypeptide reads, in one-letter code: Zinc import ATP-binding protein ZnuC (262 aa).

In terms of domain architecture, ABC transporter spans 5-220; it reads IELQDICVDF…PSYLAMFGHR (216 aa). 37–44 contributes to the ATP binding site; the sequence is GPNGAGKS.

It belongs to the ABC transporter superfamily. Zinc importer (TC 3.A.1.15.5) family. As to quaternary structure, the complex is composed of two ATP-binding proteins (ZnuC), two transmembrane proteins (ZnuB) and a solute-binding protein (ZnuA).

It localises to the cell inner membrane. It carries out the reaction Zn(2+)(out) + ATP(in) + H2O(in) = Zn(2+)(in) + ADP(in) + phosphate(in) + H(+)(in). Part of the ABC transporter complex ZnuABC involved in zinc import. Responsible for energy coupling to the transport system. The sequence is that of Zinc import ATP-binding protein ZnuC from Vibrio cholerae serotype O1 (strain ATCC 39315 / El Tor Inaba N16961).